The chain runs to 273 residues: Large ribosomal subunit protein uL2 (273 aa).

The interval 228–273 is disordered; that stretch reads VDHPHGGGEGKTSGGRHPVTPWGFPTKGKKTRKNKRTSKFIVKKRK. Residues 254–273 are compositionally biased toward basic residues; that stretch reads KGKKTRKNKRTSKFIVKKRK.

This sequence belongs to the universal ribosomal protein uL2 family. As to quaternary structure, part of the 50S ribosomal subunit. Forms a bridge to the 30S subunit in the 70S ribosome.

One of the primary rRNA binding proteins. Required for association of the 30S and 50S subunits to form the 70S ribosome, for tRNA binding and peptide bond formation. It has been suggested to have peptidyltransferase activity; this is somewhat controversial. Makes several contacts with the 16S rRNA in the 70S ribosome. The sequence is that of Large ribosomal subunit protein uL2 from Rickettsia akari (strain Hartford).